Reading from the N-terminus, the 385-residue chain is Succinate--CoA ligase [ADP-forming] subunit beta (385 aa).

An ATP-grasp domain is found at K9 to E244. Residues K46, G53–G55, E99, Q102, and E107 each bind ATP. The Mg(2+) site is built by N199 and D213. Residues N264 and G321–L323 each bind substrate.

The protein belongs to the succinate/malate CoA ligase beta subunit family. As to quaternary structure, heterotetramer of two alpha and two beta subunits. Mg(2+) serves as cofactor.

It catalyses the reaction succinate + ATP + CoA = succinyl-CoA + ADP + phosphate. The catalysed reaction is GTP + succinate + CoA = succinyl-CoA + GDP + phosphate. It participates in carbohydrate metabolism; tricarboxylic acid cycle; succinate from succinyl-CoA (ligase route): step 1/1. In terms of biological role, succinyl-CoA synthetase functions in the citric acid cycle (TCA), coupling the hydrolysis of succinyl-CoA to the synthesis of either ATP or GTP and thus represents the only step of substrate-level phosphorylation in the TCA. The beta subunit provides nucleotide specificity of the enzyme and binds the substrate succinate, while the binding sites for coenzyme A and phosphate are found in the alpha subunit. The polypeptide is Succinate--CoA ligase [ADP-forming] subunit beta (Desulforapulum autotrophicum (strain ATCC 43914 / DSM 3382 / VKM B-1955 / HRM2) (Desulfobacterium autotrophicum)).